Consider the following 599-residue polypeptide: Aspartate--tRNA ligase (599 aa).

Glu-180 serves as a coordination point for L-aspartate. An aspartate region spans residues 204-207 (QIFK). Arg-226 provides a ligand contact to L-aspartate. Residues 226-228 (RDE) and Gln-235 contribute to the ATP site. Residue His-454 coordinates L-aspartate. Position 488 (Glu-488) interacts with ATP. Arg-495 serves as a coordination point for L-aspartate. Position 540 to 543 (540 to 543 (GLDR)) interacts with ATP.

Belongs to the class-II aminoacyl-tRNA synthetase family. Type 1 subfamily. As to quaternary structure, homodimer.

The protein localises to the cytoplasm. It catalyses the reaction tRNA(Asp) + L-aspartate + ATP = L-aspartyl-tRNA(Asp) + AMP + diphosphate. In terms of biological role, catalyzes the attachment of L-aspartate to tRNA(Asp) in a two-step reaction: L-aspartate is first activated by ATP to form Asp-AMP and then transferred to the acceptor end of tRNA(Asp). The polypeptide is Aspartate--tRNA ligase (Clostridium botulinum (strain Alaska E43 / Type E3)).